The chain runs to 871 residues: Patatin-like phospholipase domain-containing protein CNBE2340 (871 aa).

The interval 20 to 53 is disordered; sequence NEDSPLSPRSFSLPPESPQLSTASPIHQRVSRKR. Residues 23-33 show a composition bias toward low complexity; it reads SPLSPRSFSLP. Residues 68–88 traverse the membrane as a helical segment; the sequence is WPLLFFIFFIIYLEFSAYVIT. A PNPLA domain is found at 243–435; it reads LCLSGGASFG…REDIPLGSLH (193 aa). A GXSXG motif is present at residues 274 to 278; sequence GTSAG. Catalysis depends on Ser-276, which acts as the Nucleophile. The Proton acceptor role is filled by Asp-422. 3 disordered regions span residues 586–707, 720–748, and 760–871; these read ALSH…NFGD, LSSP…QRFR, and VSES…QDGA. Polar residues-rich tracts occupy residues 594-606 and 687-706; these read NDPA…TNPE and PTHS…SNFG. A compositionally biased stretch (low complexity) spans 721 to 748; that stretch reads SSPFRSIRSNTSSSSNNVQSPSSSQRFR. The span at 798 to 820 shows a compositional bias: basic and acidic residues; that stretch reads VESHSDRSEDEMLHSGANVKEEY.

It belongs to the PLPL family.

The protein resides in the membrane. Functionally, probable lipid hydrolase. The sequence is that of Patatin-like phospholipase domain-containing protein CNBE2340 from Cryptococcus neoformans var. neoformans serotype D (strain B-3501A) (Filobasidiella neoformans).